Here is a 1342-residue protein sequence, read N- to C-terminus: DNA-directed RNA polymerase subunit beta (1342 aa).

This sequence belongs to the RNA polymerase beta chain family. In terms of assembly, the RNAP catalytic core consists of 2 alpha, 1 beta, 1 beta' and 1 omega subunit. When a sigma factor is associated with the core the holoenzyme is formed, which can initiate transcription.

The enzyme catalyses RNA(n) + a ribonucleoside 5'-triphosphate = RNA(n+1) + diphosphate. Its function is as follows. DNA-dependent RNA polymerase catalyzes the transcription of DNA into RNA using the four ribonucleoside triphosphates as substrates. The sequence is that of DNA-directed RNA polymerase subunit beta from Photorhabdus laumondii subsp. laumondii (strain DSM 15139 / CIP 105565 / TT01) (Photorhabdus luminescens subsp. laumondii).